The primary structure comprises 267 residues: Putative hydro-lyase RALTA_B1245 (267 aa).

Belongs to the D-glutamate cyclase family.

The sequence is that of Putative hydro-lyase RALTA_B1245 from Cupriavidus taiwanensis (strain DSM 17343 / BCRC 17206 / CCUG 44338 / CIP 107171 / LMG 19424 / R1) (Ralstonia taiwanensis (strain LMG 19424)).